The chain runs to 337 residues: Large ribosomal subunit protein uL3 (337 aa).

A disordered region spans residues 1-20 (MASIHRPKRGSLAFSPRKRA).

It belongs to the universal ribosomal protein uL3 family. In terms of assembly, part of the 50S ribosomal subunit. Forms a cluster with proteins L14 and L24e.

In terms of biological role, one of the primary rRNA binding proteins, it binds directly near the 3'-end of the 23S rRNA, where it nucleates assembly of the 50S subunit. This Methanosarcina mazei (strain ATCC BAA-159 / DSM 3647 / Goe1 / Go1 / JCM 11833 / OCM 88) (Methanosarcina frisia) protein is Large ribosomal subunit protein uL3.